Here is a 1085-residue protein sequence, read N- to C-terminus: DNA polymerase (1085 aa).

A disordered region spans residues 1059–1085; sequence YDQKRPNPRPQEPLLENPFWDDSSQTA.

This sequence belongs to the DNA polymerase type-B family. In terms of assembly, heterodimer with the terminal protein; this heterodimer binds to bp 9 to 18 of the genome. Forms a complex with viral pTP, DBP and hosts NFIA and POU2F1/OCT1 for initiation of replication.

The protein localises to the host nucleus. It carries out the reaction DNA(n) + a 2'-deoxyribonucleoside 5'-triphosphate = DNA(n+1) + diphosphate. Functionally, eukaryotic-type DNA polymerase involved in viral genomic replication. DNA synthesis is protein primed, and acts in a strand displacement replication. Its function is as follows. Eukaryotic-type DNA polymerase involved in viral genomic replication. DNA synthesis is protein primed, and acts in a strand displacement replication. Assembles in complex with viral pTP, DBP, host NFIA and host POU2F1/OCT1 on viral origin of replication. The polymerase covalently transfers dCMP onto pTP, thereby initiating complementary strand synthesis. The protein is DNA polymerase of Pantherophis guttatus (Corn snake).